Here is a 360-residue protein sequence, read N- to C-terminus: MLLWLAEYLAQYHSGFLVVQYITLRGILSVLTALFIAFWVGPIMIRMLQEKQVGQAIRDDGPKSHLSKAGTPTMGGALILVAIVISTLLWGDLENRFVWITLGVLFVFGAVGWVDDWRKVVEKNPRGLPARWKYLWLSVGALGAGCALFFTAQSPVETQLIVPFFKSVAINMGWFYIVLTYFVINGTSNAVNLTDGLDGLAIMPTVLVGGALGIFAYAGGHAEFATYLQIPYVAGAGELVIISAALCGAGLGFLWFNAYPAQVFMGDVGALSLGAVLGVMAVIVRQEIVLFIMGGVFVMETVSVMLQVGSFKLTGRRIFRMAPIHHHFELKGWPEPKIIVRFWIITVILVLVGLATLKIR.

10 helical membrane passes run 27 to 47, 73 to 93, 97 to 117, 132 to 152, 164 to 184, 199 to 219, 236 to 256, 263 to 283, 288 to 308, and 337 to 357; these read ILSVLTALFIAFWVGPIMIRM, TMGGALILVAIVISTLLWGDL, FVWITLGVLFVFGAVGWVDDW, WKYLWLSVGALGAGCALFFTA, FFKSVAINMGWFYIVLTYFVI, GLAIMPTVLVGGALGIFAYAG, AGELVIISAALCGAGLGFLWF, VFMGDVGALSLGAVLGVMAVI, IVLFIMGGVFVMETVSVMLQV, and KIIVRFWIITVILVLVGLATL.

It belongs to the glycosyltransferase 4 family. MraY subfamily. Requires Mg(2+) as cofactor.

It localises to the cell inner membrane. It carries out the reaction UDP-N-acetyl-alpha-D-muramoyl-L-alanyl-gamma-D-glutamyl-meso-2,6-diaminopimeloyl-D-alanyl-D-alanine + di-trans,octa-cis-undecaprenyl phosphate = di-trans,octa-cis-undecaprenyl diphospho-N-acetyl-alpha-D-muramoyl-L-alanyl-D-glutamyl-meso-2,6-diaminopimeloyl-D-alanyl-D-alanine + UMP. Its pathway is cell wall biogenesis; peptidoglycan biosynthesis. Catalyzes the initial step of the lipid cycle reactions in the biosynthesis of the cell wall peptidoglycan: transfers peptidoglycan precursor phospho-MurNAc-pentapeptide from UDP-MurNAc-pentapeptide onto the lipid carrier undecaprenyl phosphate, yielding undecaprenyl-pyrophosphoryl-MurNAc-pentapeptide, known as lipid I. The sequence is that of Phospho-N-acetylmuramoyl-pentapeptide-transferase from Alcanivorax borkumensis (strain ATCC 700651 / DSM 11573 / NCIMB 13689 / SK2).